Here is a 336-residue protein sequence, read N- to C-terminus: Vacuolar protein sorting-associated protein 26B (336 aa).

Residues Ser302, Ser304, and Ser319 each carry the phosphoserine modification.

Belongs to the VPS26 family. As to quaternary structure, component of the heterotrimeric retromer cargo-selective complex (CSC), also described as vacuolar protein sorting VPS subcomplex (VPS,) formed by VPS26 (VPS26A or VPS26B), VPS29 and VPS35. The CSC has a highly elongated structure with VPS26 and VPS29 binding independently at opposite distal ends of VPS35 as central platform. The CSC is believed to associate with variable sorting nexins to form functionally distinct retromer complex variants. The originally described retromer complex (also called SNX-BAR retromer) is a pentamer containing the CSC and a heterodimeric membrane-deforming subcomplex formed between SNX1 or SNX2 and SNX5 or SNX6 (also called SNX-BAR subcomplex); the respective CSC and SNX-BAR subcomplexes associate with low affinity. The CSC associates with SNX3 to form a SNX3-retromer complex. The CSC associates with SNX27, the WASH complex and the SNX-BAR subcomplex to form the SNX27-retromer complex. Interacts with VPS29, VPS35, TBC1D5, GOLPH3, SNX27.

The protein resides in the cytoplasm. It is found in the membrane. Its subcellular location is the early endosome. The protein localises to the late endosome. In terms of biological role, acts as a component of the retromer cargo-selective complex (CSC). The CSC is believed to be the core functional component of retromer or respective retromer complex variants acting to prevent missorting of selected transmembrane cargo proteins into the lysosomal degradation pathway. The recruitment of the CSC to the endosomal membrane involves RAB7A and SNX3. The SNX-BAR retromer mediates retrograde transport of cargo proteins from endosomes to the trans-Golgi network (TGN) and is involved in endosome-to-plasma membrane transport for cargo protein recycling. The SNX3-retromer mediates the retrograde transport of WLS distinct from the SNX-BAR retromer pathway. The SNX27-retromer is believed to be involved in endosome-to-plasma membrane trafficking and recycling of a broad spectrum of cargo proteins. The CSC seems to act as recruitment hub for other proteins, such as the WASH complex and TBC1D5. May be involved in retrograde transport of SORT1 but not of IGF2R. Acts redundantly with VSP26A in SNX-27 mediated endocytic recycling of SLC2A1/GLUT1. The polypeptide is Vacuolar protein sorting-associated protein 26B (VPS26B) (Homo sapiens (Human)).